The following is a 957-amino-acid chain: MGLDNIVVKGARSHNLKNIDVTIPRDKLVVLTGLSGSGKSSLAFDTIYAEGQRRYVESLSAYARQFLGQMDKPDVDSIEGLSPAISIDQKTTSRNPRSTVGTVTEIFDYLRLLYARIGKPVCPKHGIEISSQTVQQMVDRILSYEERTKLQILAPLVSGRKGTHVKVLEDIKKQGFVRVRIDGEMREVAEEIELDKNKKHTIEVVIDRIVVKEGIETRLADSLETALQLADGRVVVDIIGKEELLFSQHHACPQCGFSIPELEPRMFSFNSPFGACPTCDGLGVKLEVDLELVIPDRSRTLSENAIAPWEPISSQYYPQMLEAVCNHYGIDMDTPVEQLPDHQLEKILYGSGHEKIFFRYENDLGQVRENEILFEGVIPNVKRRYHETSSDYIRDQLEAYMAQKACPTCKGHRLKKEALAVLIGGKHLGEVTKLSIKEAKTFFESLELSKKDFSIARLILKEINDRLGFLMNVGLDYLTLSRSAGTLSGGEAQRIRLATQIGSSLMGVLYILDEPSIGLHQRDNDRLISTLAHMRDLGNTLIVVEHDEDTMLAADYIIDIGPGAGVHGGQVTAAGSPEEIMNDAKSLTGQYLSGKKFIPIPSERRQPNGRSFTVKGASENNLKQVNVEFPLGVFIAVTGVSGSGKSTLINEIVHKALAQKLHRAKDKPGKHKEIVGIEHVDKVIDIDQSPIGRTPRSNPATYTGVFDDIRDVFAMTNEAKVRGYKKGRFSFNVKGGRCEACRGDGIIKIEMHFLPDVYVPCEVCHGKRYNRETLDITYKGKTIADVLDMTVEEALEFFTNIPRIKRKIQTLVDVGLGYIKLGQPATTLSGGEAQRVKLASQLHKRATGKTLYILDEPTTGLHVDDIDRLLKVLQRIVDNGDTVLVIEHNLDVIKTVDHIIDLGPEGGDKGGTIVAQGTPEEVVEVEGSYTGKYLRPILERDRKRMDSRIREHELQRS.

33-40 (GLSGSGKS) is an ATP binding site. The segment at 252–279 (CPQCGFSIPELEPRMFSFNSPFGACPTC) adopts a C4-type zinc-finger fold. ABC transporter domains are found at residues 309–587 (WEPI…AKSL) and 607–935 (PNGR…KYLR). ATP is bound at residue 639-646 (GVSGSGKS). The segment at 738–764 (CEACRGDGIIKIEMHFLPDVYVPCEVC) adopts a C4-type zinc-finger fold.

It belongs to the ABC transporter superfamily. UvrA family. In terms of assembly, forms a heterotetramer with UvrB during the search for lesions.

The protein resides in the cytoplasm. Its function is as follows. The UvrABC repair system catalyzes the recognition and processing of DNA lesions. UvrA is an ATPase and a DNA-binding protein. A damage recognition complex composed of 2 UvrA and 2 UvrB subunits scans DNA for abnormalities. When the presence of a lesion has been verified by UvrB, the UvrA molecules dissociate. This is UvrABC system protein A from Halalkalibacterium halodurans (strain ATCC BAA-125 / DSM 18197 / FERM 7344 / JCM 9153 / C-125) (Bacillus halodurans).